Here is a 473-residue protein sequence, read N- to C-terminus: Photosystem II CP43 reaction center protein (473 aa).

A propeptide spanning residues 1-14 is cleaved from the precursor; that stretch reads MKTLYSLRRFYPVE. Thr-15 carries the post-translational modification N-acetylthreonine. Thr-15 is subject to Phosphothreonine. 5 consecutive transmembrane segments (helical) span residues 69-93, 134-155, 178-200, 255-275, and 291-312; these read LFEV…PHLA, LLGP…KDRN, KALY…RKIT, KPFA…LSYS, and WFNN…ASQA. Glu-367 lines the [CaMn4O5] cluster pocket. The chain crosses the membrane as a helical span at residues 447–471; it reads RARAAAAGFEKGIDRDFEPVLSMTP.

This sequence belongs to the PsbB/PsbC family. PsbC subfamily. PSII is composed of 1 copy each of membrane proteins PsbA, PsbB, PsbC, PsbD, PsbE, PsbF, PsbH, PsbI, PsbJ, PsbK, PsbL, PsbM, PsbT, PsbX, PsbY, PsbZ, Psb30/Ycf12, at least 3 peripheral proteins of the oxygen-evolving complex and a large number of cofactors. It forms dimeric complexes. Binds multiple chlorophylls and provides some of the ligands for the Ca-4Mn-5O cluster of the oxygen-evolving complex. It may also provide a ligand for a Cl- that is required for oxygen evolution. PSII binds additional chlorophylls, carotenoids and specific lipids. is required as a cofactor.

The protein localises to the plastid. The protein resides in the chloroplast thylakoid membrane. Functionally, one of the components of the core complex of photosystem II (PSII). It binds chlorophyll and helps catalyze the primary light-induced photochemical processes of PSII. PSII is a light-driven water:plastoquinone oxidoreductase, using light energy to abstract electrons from H(2)O, generating O(2) and a proton gradient subsequently used for ATP formation. In Lactuca sativa (Garden lettuce), this protein is Photosystem II CP43 reaction center protein.